A 122-amino-acid chain; its full sequence is Acyl carrier protein 1, mitochondrial (122 aa).

The N-terminal 34 residues, 1-34, are a transit peptide targeting the mitochondrion; sequence MALRNAILRHLRVPVQTLGLNQSKIGFLGTIRSF. Residues 44–119 form the Carrier domain; the sequence is EAVVDRVLDV…LAIEYVYNHP (76 aa). O-(pantetheine 4'-phosphoryl)serine is present on serine 79.

It belongs to the acyl carrier protein (ACP) family. Complex I is composed of at least 49 different subunits. In terms of processing, 4'-phosphopantetheine is transferred from CoA to a specific serine of the apo-ACP-like protein.

The protein resides in the mitochondrion. The protein operates within lipid metabolism; fatty acid biosynthesis. Its function is as follows. Carrier of the growing fatty acid chain in fatty acid biosynthesis. May be involved in the synthesis of short and medium chain fatty acids. Accessory and non-catalytic subunit of the mitochondrial membrane respiratory chain NADH dehydrogenase (Complex I), which functions in the transfer of electrons from NADH to the respiratory chain. This is Acyl carrier protein 1, mitochondrial (MTACP1) from Arabidopsis thaliana (Mouse-ear cress).